A 309-amino-acid polypeptide reads, in one-letter code: MTAAHVAAPEPGQYELSHLRLLEAEAIHIIREVAAEFERPVLLFSGGKDSIVMLHLAIKAFAPARLPFPVMHVDTGHNFDEVISTRDRLVAENGVRLVVASVQEDIDAGRVVDNGPSRNPLQTITLLRAIRENRFDAAFGGARRDEEKARAKERVFSFRDEFGQWDPKAQRPELWNIYNGRHRKGEHIRVFPLSNWTEYDIWAYIGAEGITLPGIYYAHTRPVFQRDGMLLAVHPYMQPRDDEEVFETSVRFRTVGDVTCTGCVESTASTVEDIIAETAVSRLTERGATRADDRISEAGMEDRKREGYF.

Belongs to the PAPS reductase family. CysD subfamily. In terms of assembly, heterodimer composed of CysD, the smaller subunit, and CysN.

The catalysed reaction is sulfate + ATP + H(+) = adenosine 5'-phosphosulfate + diphosphate. Its pathway is sulfur metabolism; hydrogen sulfide biosynthesis; sulfite from sulfate: step 1/3. Functionally, with CysN forms the ATP sulfurylase (ATPS) that catalyzes the adenylation of sulfate producing adenosine 5'-phosphosulfate (APS) and diphosphate, the first enzymatic step in sulfur assimilation pathway. APS synthesis involves the formation of a high-energy phosphoric-sulfuric acid anhydride bond driven by GTP hydrolysis by CysN coupled to ATP hydrolysis by CysD. The protein is Sulfate adenylyltransferase subunit 2 of Mycobacterium sp. (strain KMS).